Here is a 182-residue protein sequence, read N- to C-terminus: ADP-ribosylation factor 1 (182 aa).

A lipid anchor (N-myristoyl glycine) is attached at G2. GTP contacts are provided by residues 24 to 31, 67 to 71, and 126 to 129; these read GLDAAGKT, DVGGQ, and NKQD.

The protein belongs to the small GTPase superfamily. Arf family.

The protein resides in the golgi apparatus. The catalysed reaction is GTP + H2O = GDP + phosphate + H(+). Functionally, GTP-binding protein involved in protein trafficking; may modulate vesicle budding and uncoating within the Golgi apparatus. In Dictyostelium discoideum (Social amoeba), this protein is ADP-ribosylation factor 1 (arfA).